The chain runs to 214 residues: Small ribosomal subunit protein uS4c (214 aa).

2 stretches are compositionally biased toward basic residues: residues 1-14 (MSRY…KIKR) and 36-46 (LSRPKPKKKSQ). The interval 1–46 (MSRYRGPRVKKIKRLGSLPGLTTKKPPIVVRDPRKLSRPKPKKKSQ) is disordered. Residues 92–153 (MRLDNTLFRL…KEKSKALIQN (62 aa)) enclose the S4 RNA-binding domain.

It belongs to the universal ribosomal protein uS4 family. Part of the 30S ribosomal subunit. Contacts protein S5. The interaction surface between S4 and S5 is involved in control of translational fidelity.

The protein localises to the plastid. Its subcellular location is the chloroplast. In terms of biological role, one of the primary rRNA binding proteins, it binds directly to 16S rRNA where it nucleates assembly of the body of the 30S subunit. With S5 and S12 plays an important role in translational accuracy. This Pelargonium hortorum (Common geranium) protein is Small ribosomal subunit protein uS4c (rps4).